Consider the following 125-residue polypeptide: Temptin (125 aa).

The N-terminal stretch at 1 to 22 is a signal peptide; it reads MEQKRTLRVFLAVSLLCALANA. Cystine bridges form between C40–C125 and C79–C99. The disordered stretch occupies residues 78-125; sequence LCDMDSDGDGRSNGVELGDPECVWSQGETPARTTDLSHPGFDEATVSC. The segment covering 103 to 113 has biased composition (polar residues); sequence QGETPARTTDL.

Binds to attractin and enticin. Produced by the albumen gland of the egg cordons.

The protein resides in the secreted. A component of the complex of water-borne protein pheromones that stimulates attraction and mating behavior. Modulates pheromone signaling by direct binding to attractin. The polypeptide is Temptin (Aplysia californica (California sea hare)).